The primary structure comprises 157 residues: Rieske domain-containing protein (157 aa).

At Met-1 the chain carries N-acetylmethionine. A Phosphoserine modification is found at Ser-6. 2 consecutive Rieske domains span residues 16–94 (SSVC…TGEG) and 17–131 (SVCV…NIYV). [2Fe-2S] cluster-binding residues include Cys-57, His-59, Cys-80, and His-83.

The cofactor is [2Fe-2S] cluster.

In Homo sapiens (Human), this protein is Rieske domain-containing protein (RFESD).